A 475-amino-acid chain; its full sequence is Methylenomycin A resistance protein (475 aa).

The next 14 helical transmembrane spans lie at 28 to 48 (ITAL…VNVA), 65 to 85 (WIVD…GGLA), 93 to 113 (VYLW…LAPT), 123 to 143 (VQGA…VFSF), 152 to 172 (MLGL…TVGG), 173 to 193 (LMVS…IGAI), 212 to 232 (LAVP…FALI), 240 to 260 (TAGP…LLAL), 285 to 305 (LVGF…GLYF), 314 to 334 (FQAG…NIVY), 346 to 366 (LLTA…TITA), 371 to 391 (WVVA…SPGM), 416 to 436 (QIGS…TSDW), and 439 to 459 (GAAI…LSAW).

This sequence belongs to the major facilitator superfamily.

It is found in the cell membrane. Resistance to the epoxide antibiotic methylenomycin A; probably by mediating its efflux. This chain is Methylenomycin A resistance protein (mmr), found in Streptomyces coelicolor (strain ATCC BAA-471 / A3(2) / M145).